A 143-amino-acid polypeptide reads, in one-letter code: Putative nickel-responsive regulator (143 aa).

Ni(2+)-binding residues include His-82, His-97, His-99, and Cys-105.

The protein belongs to the transcriptional regulatory CopG/NikR family. The cofactor is Ni(2+).

Its function is as follows. Transcriptional regulator. The sequence is that of Putative nickel-responsive regulator from Helicobacter hepaticus (strain ATCC 51449 / 3B1).